The following is a 204-amino-acid chain: Thymidine kinase (204 aa).

ATP is bound by residues 23-30 (GSMFSGKT) and 95-98 (DEAQ). The active-site Proton acceptor is Glu-96. The Zn(2+) site is built by Cys-152, Cys-155, Cys-184, and Cys-187.

Belongs to the thymidine kinase family. In terms of assembly, homotetramer.

It is found in the cytoplasm. The catalysed reaction is thymidine + ATP = dTMP + ADP + H(+). This is Thymidine kinase from Porphyromonas gingivalis (strain ATCC 33277 / DSM 20709 / CIP 103683 / JCM 12257 / NCTC 11834 / 2561).